Consider the following 161-residue polypeptide: Small ribosomal subunit protein uS9 (161 aa).

It belongs to the universal ribosomal protein uS9 family.

The polypeptide is Small ribosomal subunit protein uS9 (Bartonella tribocorum (strain CIP 105476 / IBS 506)).